A 333-amino-acid chain; its full sequence is Cell shape-determining protein Mbl (333 aa).

Residues 12–14 (TAN), 156–158 (GGT), 204–207 (EDIK), and 284–287 (GGAL) contribute to the ATP site.

This sequence belongs to the FtsA/MreB family. In terms of assembly, forms polymers. Forms a complex with MreB and MreBH. Interacts with MreC.

The protein resides in the cytoplasm. Forms membrane-associated dynamic filaments that are essential for cell shape determination. Acts by regulating cell wall synthesis and cell elongation, and thus cell shape. A feedback loop between cell geometry and Mbl localization may maintain elongated cell shape by targeting cell wall growth to regions of negative cell wall curvature. Filaments rotate around the cell circumference in concert with the cell wall synthesis enzymes. The process is driven by the cell wall synthesis machinery and does not depend on Mbl polymerization. Organizes peptidoglycan synthesis in the lateral cell wall. Also required for proper chromosome segregation. The sequence is that of Cell shape-determining protein Mbl (mbl) from Bacillus subtilis (strain 168).